The sequence spans 113 residues: Putative pterin-4-alpha-carbinolamine dehydratase (113 aa).

The protein belongs to the pterin-4-alpha-carbinolamine dehydratase family.

The catalysed reaction is (4aS,6R)-4a-hydroxy-L-erythro-5,6,7,8-tetrahydrobiopterin = (6R)-L-erythro-6,7-dihydrobiopterin + H2O. The chain is Putative pterin-4-alpha-carbinolamine dehydratase from Legionella pneumophila (strain Lens).